Consider the following 78-residue polypeptide: U-scoloptoxin(04)-Er1a (78 aa).

The first 24 residues, 1–24, serve as a signal peptide directing secretion; sequence MTRHLIFAAVLLVCLFVCWNAIGA. The propeptide occupies 25–28; that stretch reads QDAR.

It belongs to the scoloptoxin-04 family. In terms of processing, contains 2 disulfide bonds. As to expression, expressed by the venom gland.

It localises to the secreted. This is U-scoloptoxin(04)-Er1a from Ethmostigmus rubripes (Giant centipede).